Here is a 185-residue protein sequence, read N- to C-terminus: Ribosome-recycling factor (185 aa).

A compositionally biased stretch (basic and acidic residues) spans Thr138–Ser179. Residues Thr138–Gly185 are disordered.

Belongs to the RRF family.

It is found in the cytoplasm. Functionally, responsible for the release of ribosomes from messenger RNA at the termination of protein biosynthesis. May increase the efficiency of translation by recycling ribosomes from one round of translation to another. This Lactobacillus gasseri (strain ATCC 33323 / DSM 20243 / BCRC 14619 / CIP 102991 / JCM 1131 / KCTC 3163 / NCIMB 11718 / NCTC 13722 / AM63) protein is Ribosome-recycling factor.